The following is a 157-amino-acid chain: Transcriptional repressor NrdR (157 aa).

The segment at 3–34 (CPFCGHMESQVKDSRPSEDGAAIRRRRLCPEC) is a zinc-finger region. Positions 49-139 (LTIVKRSGRR…VYRDFRETSD (91 aa)) constitute an ATP-cone domain.

It belongs to the NrdR family. Zn(2+) serves as cofactor.

In terms of biological role, negatively regulates transcription of bacterial ribonucleotide reductase nrd genes and operons by binding to NrdR-boxes. This Caulobacter sp. (strain K31) protein is Transcriptional repressor NrdR.